The primary structure comprises 1083 residues: uncharacterized protein (1083 aa).

The interval Ser-93–Ser-145 is disordered. Residues Ser-108–Ser-145 are compositionally biased toward low complexity.

The protein resides in the virion. This is an uncharacterized protein from Acanthamoeba polyphaga (Amoeba).